The chain runs to 253 residues: MKKVITRENPTVEEVKELLDIAEKHGGVVTIFARCRVYYEGRAKSELGEGDRIVIIKPDGSFLIHQNKKREPVNWQPPGSKVSMRENSIISIRRKPHERLEVELMEVYAVTVFLAEDYEELALTGSEAEMAKLIFENPNVIEEGFKPMFREKQIKHGIVDIMGLDKDGNIVVLELKRRKADLHAVSQLKRYVDSLKEEYGEKVRGILVAPSLTEGAKKLLEKEGLEFRKLEPPKNNDNKREVKQKTLDFFTPC.

Belongs to the NucS endonuclease family.

It is found in the cytoplasm. In terms of biological role, cleaves both 3' and 5' ssDNA extremities of branched DNA structures. The sequence is that of Endonuclease NucS from Pyrococcus horikoshii (strain ATCC 700860 / DSM 12428 / JCM 9974 / NBRC 100139 / OT-3).